Here is a 208-residue protein sequence, read N- to C-terminus: Small ribosomal subunit protein uS4 (208 aa).

The disordered stretch occupies residues 24 to 52 (GVKPFDVKTKKANKAPGQHGQARGGKQSE). The 63-residue stretch at 98-160 (SRLDNVVYRM…AKQQLRIKNA (63 aa)) folds into the S4 RNA-binding domain.

Belongs to the universal ribosomal protein uS4 family. Part of the 30S ribosomal subunit. Contacts protein S5. The interaction surface between S4 and S5 is involved in control of translational fidelity.

Its function is as follows. One of the primary rRNA binding proteins, it binds directly to 16S rRNA where it nucleates assembly of the body of the 30S subunit. Functionally, with S5 and S12 plays an important role in translational accuracy. This chain is Small ribosomal subunit protein uS4, found in Acinetobacter baumannii (strain ATCC 17978 / DSM 105126 / CIP 53.77 / LMG 1025 / NCDC KC755 / 5377).